The following is a 1178-amino-acid chain: Thrombospondin-2 (1178 aa).

The N-terminal stretch at 1 to 22 (MLQRSRLLWLAVFITLWVSSDA) is a signal peptide. The Laminin G-like domain occupies 25–221 (DAKEEENTFD…LQNIHLIFDT (197 aa)). 4 N-linked (GlcNAc...) asparagine glycosylation sites follow: Asn157, Asn244, Asn317, and Asn322. A VWFC domain is found at 324 to 381 (SVCWQDGRVFADSESWIVDSCTKCTCQDSKIVCHQITCPPVSCADPSFIEGECCPVCS). 3 TSP type-1 domains span residues 387-437 (EEGW…KKCD), 443-498 (DGGW…APCP), and 500-555 (NGQW…RDCP). 27 cysteine pairs are disulfide-bonded: Cys399–Cys431, Cys403–Cys436, Cys414–Cys421, Cys455–Cys492, Cys459–Cys497, Cys470–Cys482, Cys512–Cys549, Cys516–Cys554, Cys527–Cys539, Cys559–Cys570, Cys564–Cys580, Cys583–Cys594, Cys600–Cys616, Cys607–Cys625, Cys628–Cys652, Cys658–Cys671, Cys665–Cys684, Cys686–Cys697, Cys713–Cys721, Cys726–Cys746, Cys762–Cys782, Cys785–Cys805, Cys821–Cys841, Cys844–Cys864, Cys882–Cys902, Cys918–Cys938, and Cys954–Cys1175. Asn463 is a glycosylation site (N-linked (GlcNAc...) asparagine). The 41-residue stretch at 555–595 (PIDGCLSNPCFPGAECNSYPDGSWSCGPCPAGFLGNGTVCE) folds into the EGF-like 1 domain. An N-linked (GlcNAc...) asparagine glycan is attached at Asn590. In terms of domain architecture, EGF-like 2 spans 654–698 (PENPCKDKTHSCHKSAECIYLGHFSDPMYKCECRTGYAGDGRICG). TSP type-3 repeat units lie at residues 699-734 (EDSDLDGWPNNNLVCAANATYHCVKDNCPLLPNSGQ), 735-770 (EDFDKDGKGDACDEDDDNDGVEDDKDNCPLLFNPRQ), 771-793 (FDYDKDEVGDRCDNCPYVHNPAQ), 794-829 (IDTDNNGEGDSCAVDIDGDDIFNERDNCPYVYNTDQ), 830-852 (SDTDGDGVGDQCDNCPLMHNPDQ), 853-890 (TDADNDLVGDQCDNNEDIDEDGHQNNQDNCPYIPNANQ), 891-926 (ADHDKDGKGDACDPDDDNDGIPDDRDNCRLRYNPEQ), and 927-962 (EDSDGDGRGDICKDDFDDDNVPDIFDVCPENNAISE). N-linked (GlcNAc...) asparagine glycosylation is present at Asn716. Positions 737–760 (FDKDGKGDACDEDDDNDGVEDDKD) are disordered. The segment covering 746-759 (CDEDDDNDGVEDDK) has biased composition (acidic residues). The disordered stretch occupies residues 852–941 (QTDADNDLVG…DGRGDICKDD (90 aa)). A compositionally biased stretch (acidic residues) spans 853-872 (TDADNDLVGDQCDNNEDIDE). Basic and acidic residues predominate over residues 891–901 (ADHDKDGKGDA). Residues 902–911 (CDPDDDNDGI) show a composition bias toward acidic residues. Composition is skewed to basic and acidic residues over residues 912 to 924 (PDDRDNCRLRYNP) and 931 to 940 (GDGRGDICKD). Residues 934-936 (RGD) carry the Cell attachment site motif. The TSP C-terminal domain occupies 966–1178 (RKFQMVPLDP…SDLKYECRDA (213 aa)). N-linked (GlcNAc...) asparagine glycosylation is present at Asn1075.

It belongs to the thrombospondin family. As to quaternary structure, homotrimer; disulfide-linked. Can bind to fibrinogen, fibronectin, laminin and type V collagen.

Its function is as follows. Adhesive glycoprotein that mediates cell-to-cell and cell-to-matrix interactions. In Gallus gallus (Chicken), this protein is Thrombospondin-2 (THBS2).